The chain runs to 358 residues: Photosystem II protein D1 2 (358 aa).

3 helical membrane-spanning segments follow: residues 28–45 (YVGW…AATI), 117–132 (HFLI…QWEL), and 141–155 (WICV…AAMV). A chlorophyll a-binding site is contributed by His117. Residue Tyr125 participates in pheophytin a binding. [CaMn4O5] cluster is bound by residues Asp169 and Glu188. A helical membrane pass occupies residues 196 to 217 (FHMLGVAGVFGGSLFSAMHGSL). His197 serves as a coordination point for chlorophyll a. Residues His214 and 263–264 (SF) contribute to the a quinone site. His214 contacts Fe cation. His271 contributes to the Fe cation binding site. A helical transmembrane segment spans residues 273–287 (FLAAWPVVGIWFTSM). The [CaMn4O5] cluster site is built by His331, Glu332, Asp341, and Ala343. Residues 344–358 (TTESAPVALQAPAVG) constitute a propeptide that is removed on maturation.

This sequence belongs to the reaction center PufL/M/PsbA/D family. PSII is composed of 1 copy each of membrane proteins PsbA, PsbB, PsbC, PsbD, PsbE, PsbF, PsbH, PsbI, PsbJ, PsbK, PsbL, PsbM, PsbT, PsbX, PsbY, PsbZ, Psb30/Ycf12, peripheral proteins PsbO, CyanoQ (PsbQ), PsbU, PsbV and a large number of cofactors. It forms dimeric complexes. It depends on The D1/D2 heterodimer binds P680, chlorophylls that are the primary electron donor of PSII, and subsequent electron acceptors. It shares a non-heme iron and each subunit binds pheophytin, quinone, additional chlorophylls, carotenoids and lipids. D1 provides most of the ligands for the Mn4-Ca-O5 cluster of the oxygen-evolving complex (OEC). There is also a Cl(-1) ion associated with D1 and D2, which is required for oxygen evolution. The PSII complex binds additional chlorophylls, carotenoids and specific lipids. as a cofactor. Tyr-160 forms a radical intermediate that is referred to as redox-active TyrZ, YZ or Y-Z. Post-translationally, C-terminally processed by CtpA; processing is essential to allow assembly of the oxygen-evolving complex and thus photosynthetic growth.

It is found in the cellular thylakoid membrane. It catalyses the reaction 2 a plastoquinone + 4 hnu + 2 H2O = 2 a plastoquinol + O2. Its function is as follows. Photosystem II (PSII) is a light-driven water:plastoquinone oxidoreductase that uses light energy to abstract electrons from H(2)O, generating O(2) and a proton gradient subsequently used for ATP formation. It consists of a core antenna complex that captures photons, and an electron transfer chain that converts photonic excitation into a charge separation. The D1/D2 (PsbA/PsbD) reaction center heterodimer binds P680, the primary electron donor of PSII as well as several subsequent electron acceptors. The polypeptide is Photosystem II protein D1 2 (Synechococcus sp. (strain RCC307)).